The primary structure comprises 96 residues: DNA-directed RNA polymerase subunit Rpo11 (96 aa).

It belongs to the archaeal Rpo11/eukaryotic RPB11/RPC19 RNA polymerase subunit family. In terms of assembly, part of the RNA polymerase complex.

The protein resides in the cytoplasm. The catalysed reaction is RNA(n) + a ribonucleoside 5'-triphosphate = RNA(n+1) + diphosphate. DNA-dependent RNA polymerase (RNAP) catalyzes the transcription of DNA into RNA using the four ribonucleoside triphosphates as substrates. In Nanoarchaeum equitans (strain Kin4-M), this protein is DNA-directed RNA polymerase subunit Rpo11.